Consider the following 353-residue polypeptide: Nucleotide-binding protein sce5766 (353 aa).

ATP is bound at residue 27–34; sequence GLSGAGKS. 76–79 contributes to the GTP binding site; it reads DVRV. Positions 310 to 353 are disordered; that stretch reads SGVPSGVGEGMAGAPGVDLRLAQPGATPSEPRPASDTSVTGGER. Residues 344–353 show a composition bias toward polar residues; it reads SDTSVTGGER.

It belongs to the RapZ-like family.

Displays ATPase and GTPase activities. The polypeptide is Nucleotide-binding protein sce5766 (Sorangium cellulosum (strain So ce56) (Polyangium cellulosum (strain So ce56))).